Consider the following 2255-residue polypeptide: Defense against restriction protein B (2255 aa).

In terms of domain architecture, Helicase ATP-binding spans 841–1126 (VRRLSEDGRG…YNMLSHVLPK (286 aa)). 854–861 (FGTGLGKT) contributes to the ATP binding site. A DEAH box motif is present at residues 1052-1055 (DEGH). Positions 1198–1234 (ELDEHQQDAPLTEEQLAAYEELRQQAEAAAKANNGVT) form a coiled coil. The Helicase C-terminal domain maps to 1383–1568 (KLKRIICNAL…EMENADANDM (186 aa)). Residues 1617–1654 (HAAGEDVEVLTAELERSKAELEKTTAEVAKFKQAVMAK) adopt a coiled-coil conformation.

It belongs to the helicase family.

It is found in the virion. In terms of biological role, capsid internal protein that is probably ejected along with the viral DNA and prevents degradation of viral DNA by the host EcoB and EcoK restriction-modification antiviral defense systems. This chain is Defense against restriction protein B, found in Escherichia phage P1 (Bacteriophage P1).